The primary structure comprises 877 residues: Clumping factor B (877 aa).

An N-terminal signal peptide occupies residues 1–44 (MKKRIDYLSNKQNKYSIRRFTVGTTSVIVGATILFGIGNHQAQA). Positions 15–26 (YSIRRFTVGTTS) match the YSIRK-G/S signaling motif motif. Polar residues-rich tracts occupy residues 44–61 (ASEQ…NASA) and 68–95 (MIET…NVDS). The tract at residues 44 to 192 (ASEQSNDTTQ…QGTSKPSVRT (149 aa)) is disordered. Residues 45 to 542 (SEQSNDTTQS…GSADGDSAVN (498 aa)) form a ligand binding A region region. Low complexity predominate over residues 96-119 (TTKPMSTQTSNTTTTEPASTNETP). Over residues 120-189 (QPTAIKNQAT…SNAQGTSKPS (70 aa)) the composition is skewed to polar residues. Positions 272 to 276 (DYSNS) match the MIDAS-like motif motif. Positions 530-849 (YGGGSADGDS…ETGDKSENTN (320 aa)) are disordered. The segment covering 545–555 (DPTPGPPVDPE) has biased composition (pro residues). Positions 556–801 (PSPDPEPEPT…SDSDSDSDSD (246 aa)) are enriched in acidic residues. Residues 805–816 (RVTPPNNEQKAP) show a composition bias toward polar residues. Residues 833-846 (HKTDALPETGDKSE) are compositionally biased toward basic and acidic residues. An LPXTG sorting signal motif is present at residues 838 to 842 (LPETG). Pentaglycyl murein peptidoglycan amidated threonine is present on T841. A propeptide spans 842–877 (GDKSENTNATLFGAMMALLGSLLLFRKRKQDHKEKA) (removed by sortase).

This sequence belongs to the serine-aspartate repeat-containing protein (SDr) family. In terms of processing, proteolytically cleaved by aureolysin (aur). This cleavage leads to the inactivation of ClfB.

Its subcellular location is the secreted. It localises to the cell wall. Its function is as follows. Cell surface-associated protein implicated in virulence by promoting bacterial attachment to both alpha- and beta-chains of human fibrinogen and inducing the formation of bacterial clumps. The chain is Clumping factor B (clfB) from Staphylococcus aureus (strain Mu50 / ATCC 700699).